We begin with the raw amino-acid sequence, 156 residues long: Small ribosomal subunit protein uS7 (156 aa).

Belongs to the universal ribosomal protein uS7 family. In terms of assembly, part of the 30S ribosomal subunit. Contacts proteins S9 and S11.

In terms of biological role, one of the primary rRNA binding proteins, it binds directly to 16S rRNA where it nucleates assembly of the head domain of the 30S subunit. Is located at the subunit interface close to the decoding center, probably blocks exit of the E-site tRNA. The protein is Small ribosomal subunit protein uS7 of Klebsiella pneumoniae (strain 342).